Here is a 520-residue protein sequence, read N- to C-terminus: UvrABC system protein C (520 aa).

The GIY-YIG domain occupies 11–89; the sequence is EEPGCYQFKD…IKKYQPKYNI (79 aa). A UVR domain is found at 195–230; sequence QDLIYDLRKEMETFAAAEEYEKALVIRDRIAAIENL.

The protein belongs to the UvrC family. In terms of assembly, interacts with UvrB in an incision complex.

It is found in the cytoplasm. In terms of biological role, the UvrABC repair system catalyzes the recognition and processing of DNA lesions. UvrC both incises the 5' and 3' sides of the lesion. The N-terminal half is responsible for the 3' incision and the C-terminal half is responsible for the 5' incision. This is UvrABC system protein C from Methanospirillum hungatei JF-1 (strain ATCC 27890 / DSM 864 / NBRC 100397 / JF-1).